The chain runs to 1091 residues: Sodium/potassium exporting P-type ATPase 2 (1091 aa).

Over Met-1–Lys-63 the chain is Cytoplasmic. Residues Ala-64–Ile-84 traverse the membrane as a helical segment. At Ser-85–Asp-90 the chain is on the extracellular side. Residues Trp-91 to Gln-111 traverse the membrane as a helical segment. Residues Glu-112–Lys-282 lie on the Cytoplasmic side of the membrane. Residues Leu-283–Ala-303 traverse the membrane as a helical segment. Residues Ser-304–Arg-312 are Extracellular-facing. The chain crosses the membrane as a helical span at residues Val-313–Leu-333. Residues Thr-334–Phe-815 lie on the Cytoplasmic side of the membrane. Asp-369 (4-aspartylphosphate intermediate) is an active-site residue. Mg(2+) contacts are provided by Asp-369 and Thr-371. ATP is bound by residues Thr-371 and Glu-483. Residues Ala-499 to Gly-525 are disordered. Polar residues predominate over residues Glu-503 to Gln-519. Residues Lys-561, Arg-606, Thr-673, Gly-674, Asp-675, Arg-732, and Lys-738 each contribute to the ATP site. Mg(2+) is bound at residue Asp-757. Asn-760 provides a ligand contact to ATP. A helical transmembrane segment spans residues Val-816–Phe-836. At Arg-837–Ser-848 the chain is on the extracellular side. The chain crosses the membrane as a helical span at residues Pro-849–Leu-869. Topologically, residues Glu-870–Glu-885 are cytoplasmic. A helical membrane pass occupies residues Val-886 to Gly-906. The Extracellular segment spans residues Ser-907–Arg-943. A helical membrane pass occupies residues Ser-944–Met-964. Residues Arg-965 to Phe-991 are Cytoplasmic-facing. The chain crosses the membrane as a helical span at residues Leu-992–Ile-1012. The Extracellular portion of the chain corresponds to Asn-1013 to Pro-1021. Residues Ile-1022 to Leu-1042 form a helical membrane-spanning segment. Over Tyr-1043–Gln-1091 the chain is Cytoplasmic.

This sequence belongs to the cation transport ATPase (P-type) (TC 3.A.3) family. Type IID subfamily. Mg(2+) serves as cofactor. The active site is phosphorylated in presence of sodium or potassium and in conditions of higher pH. Not phosphorylated in presence of calcium ions.

Its subcellular location is the cell membrane. The enzyme catalyses Na(+)(in) + ATP + H2O = Na(+)(out) + ADP + phosphate + H(+). The catalysed reaction is K(+)(in) + ATP + H2O = K(+)(out) + ADP + phosphate + H(+). Functionally, catalyzes the hydrolysis of ATP coupled with the export of sodium and potassium from the cell. May export potassium less efficiently. May transport other cations such as lithium. Sodium/potassium efflux ATPases are involved in salt tolerance and maintaining the membrane potential across the plasma membrane in high salinity (Na+) or alkaline (K+) environments. The protein is Sodium/potassium exporting P-type ATPase 2 of Saccharomyces cerevisiae (strain ATCC 204508 / S288c) (Baker's yeast).